A 102-amino-acid polypeptide reads, in one-letter code: Small ribosomal subunit protein uS10 (102 aa).

This sequence belongs to the universal ribosomal protein uS10 family. As to quaternary structure, part of the 30S ribosomal subunit.

Its function is as follows. Involved in the binding of tRNA to the ribosomes. This Lactobacillus helveticus (strain DPC 4571) protein is Small ribosomal subunit protein uS10.